The chain runs to 62 residues: Photosystem II reaction center protein Z (62 aa).

Helical transmembrane passes span 8–28 (FLIA…VAYA) and 41–61 (YVGS…NFLV).

This sequence belongs to the PsbZ family. As to quaternary structure, PSII is composed of 1 copy each of membrane proteins PsbA, PsbB, PsbC, PsbD, PsbE, PsbF, PsbH, PsbI, PsbJ, PsbK, PsbL, PsbM, PsbT, PsbX, PsbY, PsbZ, Psb30/Ycf12, peripheral proteins PsbO, CyanoQ (PsbQ), PsbU, PsbV and a large number of cofactors. It forms dimeric complexes.

The protein resides in the cellular thylakoid membrane. Its function is as follows. May control the interaction of photosystem II (PSII) cores with the light-harvesting antenna, regulates electron flow through the 2 photosystem reaction centers. PSII is a light-driven water plastoquinone oxidoreductase, using light energy to abstract electrons from H(2)O, generating a proton gradient subsequently used for ATP formation. The chain is Photosystem II reaction center protein Z from Microcystis aeruginosa (strain NIES-843 / IAM M-2473).